The sequence spans 2604 residues: MESDSVAGSASSSDAAASHLPSVSVLLDALEQSASTPRIANGLSQRLLRSLQFSNENKLSFKALNGACRVLRLACIQAKESRKSGCVSPLVESSDCGVIVDSPHKKSDSSHTEDCWFECVESCVGIFTEFFSSTNDAKVYVLRSSVCVDCLFELFWEKAVRNNVMKLIIDLMKIRPLCEEDKSAKLQVCSKYLETFTQVKERENDSVDLSVDLLAGMRDLIKSDSRYYQALFREGECFLHIVSLLNGNLDEANGEKLVLNVLQTLTSLLANNDTSKFAFKALAGKGYQTLQSLLLDFFQWKPTQRLLDALLDMLVDGKFDDKGSALIKNEDVIILYLNVLQKSSESLQCYGLNLFQQLLRDSISNRASCVRAGMLHLLLDWFSLENDDSVILKITQLTQTIGGHSISGKDIRKIFALLRSERVGNQQRYRSLLLACLLSMLNEKGPTGFFDMNGVESGIVIRTPVQWPANKGFSFCCWLRVESFPGDGKMGIFSFMSKNGKGCFAALGKDGLSYVSLNLKRQCVNVHTNLVCKKWHFICVSHSIGRAFWGGSLLRCYVNGDLVSSERCSYPKVTDVLTSCLIGTRITLPHIQDNDGLESIRDVFPFFGQIGPVYLFNDSLSSEQVQAIYSLGPSYMYAFLENEMTCPFSDNPFPSGILDGKDGLASKVSFGLNAQASDGRRLFNVSRVSDHLQERLAFEADIMVGTQLCSRRLLQQIIYCVGGISVFFPLITQSDRCESETLNEETSAMPTKERMTAEVIELIASVLDENPANQQQMHLLAGFPILGFLLQSIQPKQLNLETLSSLKHLFNVISSSGFAEQLVEDAISSIFLNPHIWLHAAYNVQRELYMFLIQQLDNDPRLLGSLCRLPRVIDIVWNFYWESERYCKGSKPLMHPTRTIAERPSRDEIHKIRLLLLSLGEMSLRHNISSGDVKALTAFFETCQDVACIEDVLHMVIRAISQTSVLVSFLEQVNLIGGCHIFVDLLQRDYEPIRLLSLQFLGRLLYDVPSERKGPKFFNLAVGRTKSLSQGHKKIGARTQPIFLAMSDRLFQYPQTDNLRATLFDVLLGGASPKQVLQKHNQVDKHRSKPSNSHFFLPQIFVFIFEFLSGCKDGLARMKIISDILDLLDSNPMNVEALMEFGWSAWLTASMKLDVIKDYRSELLNHDDLALNEQHFVRGLFCVVLCHYILSVKGGWQQLEETVNFILLQSEHNDVPYRSFLRDLYEDLIQRLVELSSEDNIFLSHPCRDNVLYLLRLVDEMLVREFGSRLLFPAISTDFSEDLLQLGNREDPTLGLDESFQRFLTEEISRNTECQQSCTTVTELMTNERWWNLYDNLWKIICDINGRGPVKMSPKSLATGPSIGQRARGLVESLNVPAAEMAAVVVSGGIGSALSGKMNKNVDKAMLLRGEKCPRIVFRLVTLYLCMSSLEKATRCVQQVTSLLPSFLAADDEQSKSRLHLFIGCLLYVRSQYGKLDDGARFHVISHLIRETVSCGKSILATSGMNKDDSSDSGGIFKEMGSIQNLIHKDRVLAAVTDETTYMKTLISDRTRQVQALGERNNETLSIECNSKKAFDGELQNVLKTVVTWDENRRVSVQLSHEEQQQNVTEKWIHMLRSLMDERGPWSATPFPNNILNRWKLDRTEDSWRRRPKLRRNYHFDERLCHPPSTSTATENETSNVINESKSGVIHIPEQMKKFLLKGIRRITDEGGSDSCENDSSQAEQSFMDTSADIQFSELVRTSSGLKDVVQDKVDASSLEVGTSEVLTSVPCVLVTPKRKLAGWLAVMKNVLHFSGEFLVEGTGGSAVFKNFSTSKGSDVTKAENKQNLVKWSSPYDSETFLDLESGNKNKKPLKKVKRHRRWKIGKVKSVHWTRYLLQYTALEIFFQESVPPVFLNFASQKNAKEVGMLIVSTRNEFLFPKNVPRDRTAMISFVDRRIAMEMAETARDRWRRREITNFEYLMILNTLAGRSYNDLTQYPVFPWVVADYSSETLDFSKASTFRDLSKPVGALDTRRFEIFEDRYHSFSDPDIPSFYYGSHYSSMGSVLYYLLRLEPFTSLHRSLQGGKFDHADRLFQSVEGSFRNCLSNTSDVKELIPEFFYMPEFLVNSNSYHLGVKQDGEPLGEVCLPPWAKGSPEMFIARNREALESEYVSSHLHDWIDLIFGHKQRGKPAVEAANIFYYLTYEGAVDVENMEDQLQISAIEDQIANFGQTPIQIFRKKHPRRGPPIPIAHPLYFAPASINLSSILPATTHSPSAVLYVGVVDSNIVLVNQGLTLSVKIWLTTQLHSGGNFTFSSAQDPFFGVGSDVLSPRNIGSPLADNVELGSQCFAAMQMPLENFLVSCGNWENSFHVISLTDGRVVQSIRHHKDVVSCVAVTADSTILATGSYDTTVMVWDILRMRTPEKRVRNTHAEVLRKDIVIADAPSHILCGHDDIITCLYVSTDLDIVISGSKDGTCVFHTLREGRYIRSLKHPSGSAVSKLAASHHGRIVLYGDDDLSLHLYSINGKHLASSESNGRINCLELSKCGEFLVSAGDQGQIIVRSMNTLEVVKRYNGAGKIITSLTVTQEECFLAGTKDGALLVYSIENPQHRKPSPIWSIKS.

Positions valine 1761–valine 1912 constitute a BEACH-type PH domain. A BEACH domain is found at aspartate 1936 to arginine 2226. WD repeat units follow at residues histidine 2254 to asparagine 2293, histidine 2368 to lysine 2407, glycine 2433 to lysine 2474, proline 2476 to serine 2515, glutamate 2516 to asparagine 2557, and glycine 2558 to proline 2596.

May be involved in the suppression of BCHC1 activity. The polypeptide is BEACH domain-containing protein B (Arabidopsis thaliana (Mouse-ear cress)).